We begin with the raw amino-acid sequence, 122 residues long: Large ribosomal subunit protein uL14 (122 aa).

Belongs to the universal ribosomal protein uL14 family. As to quaternary structure, part of the 50S ribosomal subunit. Forms a cluster with proteins L3 and L19. In the 70S ribosome, L14 and L19 interact and together make contacts with the 16S rRNA in bridges B5 and B8.

Binds to 23S rRNA. Forms part of two intersubunit bridges in the 70S ribosome. The chain is Large ribosomal subunit protein uL14 from Caldicellulosiruptor bescii (strain ATCC BAA-1888 / DSM 6725 / KCTC 15123 / Z-1320) (Anaerocellum thermophilum).